The primary structure comprises 74 residues: Small ribosomal subunit protein eS28 (74 aa).

It belongs to the eukaryotic ribosomal protein eS28 family.

The sequence is that of Small ribosomal subunit protein eS28 from Halorubrum lacusprofundi (strain ATCC 49239 / DSM 5036 / JCM 8891 / ACAM 34).